The following is a 281-amino-acid chain: 3-methyl-2-oxobutanoate hydroxymethyltransferase (281 aa).

Residues 1 to 20 (MSEQTIYGANTPGGSGPRTK) are disordered. Mg(2+) is bound by residues aspartate 62 and aspartate 101. 3-methyl-2-oxobutanoate is bound by residues 62–63 (DS), aspartate 101, and lysine 131. A Mg(2+)-binding site is contributed by glutamate 133. The active-site Proton acceptor is glutamate 199.

This sequence belongs to the PanB family. In terms of assembly, homodecamer; pentamer of dimers. It depends on Mg(2+) as a cofactor.

The protein localises to the cytoplasm. The catalysed reaction is 3-methyl-2-oxobutanoate + (6R)-5,10-methylene-5,6,7,8-tetrahydrofolate + H2O = 2-dehydropantoate + (6S)-5,6,7,8-tetrahydrofolate. Its pathway is cofactor biosynthesis; (R)-pantothenate biosynthesis; (R)-pantoate from 3-methyl-2-oxobutanoate: step 1/2. In terms of biological role, catalyzes the reversible reaction in which hydroxymethyl group from 5,10-methylenetetrahydrofolate is transferred onto alpha-ketoisovalerate to form ketopantoate. The protein is 3-methyl-2-oxobutanoate hydroxymethyltransferase of Mycobacterium bovis (strain ATCC BAA-935 / AF2122/97).